Reading from the N-terminus, the 216-residue chain is Soluble inorganic pyrophosphatase 4 (216 aa).

Ser-18 is modified (phosphoserine). Substrate-binding residues include Lys-66 and Arg-80. The active-site Proton donor is Tyr-88. Residue Tyr-92 participates in substrate binding. The Mg(2+) site is built by Asp-102, Asp-107, and Asp-139. Tyr-176 contributes to the substrate binding site.

Belongs to the PPase family. Monomer. The cofactor is Mg(2+). In terms of tissue distribution, ubiquitous, excepted in pollen. Very low expression in cork, xylem and hypocotyls.

Its subcellular location is the cytoplasm. It carries out the reaction diphosphate + H2O = 2 phosphate + H(+). With respect to regulation, inhibited by Zn(2+), Ca(2+), Ba(2+), Fe(2+), Co(2+), Cu(2+), Eu(2+), Eu(3+) and Mn(2+). In terms of biological role, catalyzes the irreversible hydrolysis of pyrophosphate (PPi) to phosphate. The MgPPi(2-) complex binds to the enzyme only after a free Mg(2+) ion has bound. No activity with glycerol-3-phosphate, glucose-6-phosphate, p-nitrophenylphosphate, ADP, NADP(+), NAD(+),NADH, NADPH or phosphoribosyl pyrophosphate as substrates. This Arabidopsis thaliana (Mouse-ear cress) protein is Soluble inorganic pyrophosphatase 4.